Here is a 599-residue protein sequence, read N- to C-terminus: Elongation factor 4 (599 aa).

The tr-type G domain maps to Ser-5 to Gln-187. Residues Asp-17–Thr-22 and Asn-134–Asp-137 contribute to the GTP site.

It belongs to the TRAFAC class translation factor GTPase superfamily. Classic translation factor GTPase family. LepA subfamily.

It localises to the cell inner membrane. It carries out the reaction GTP + H2O = GDP + phosphate + H(+). Functionally, required for accurate and efficient protein synthesis under certain stress conditions. May act as a fidelity factor of the translation reaction, by catalyzing a one-codon backward translocation of tRNAs on improperly translocated ribosomes. Back-translocation proceeds from a post-translocation (POST) complex to a pre-translocation (PRE) complex, thus giving elongation factor G a second chance to translocate the tRNAs correctly. Binds to ribosomes in a GTP-dependent manner. This is Elongation factor 4 from Azotobacter vinelandii (strain DJ / ATCC BAA-1303).